Reading from the N-terminus, the 473-residue chain is Photosystem II CP43 reaction center protein (473 aa).

The propeptide occupies 1–14 (MKTLYSLRRSYPVE). At threonine 15 the chain carries N-acetylthreonine. Phosphothreonine is present on threonine 15. 5 helical membrane passes run 69 to 93 (LFEV…PHLA), 134 to 155 (LIGP…KDRN), 178 to 200 (KALY…RKIT), 255 to 275 (KPFA…LSYS), and 291 to 312 (WFNN…ASQA). Residue glutamate 367 participates in [CaMn4O5] cluster binding. A helical membrane pass occupies residues 447-471 (RARAAAAGFEKGIDRDFEPVLSMTP).

Belongs to the PsbB/PsbC family. PsbC subfamily. As to quaternary structure, PSII is composed of 1 copy each of membrane proteins PsbA, PsbB, PsbC, PsbD, PsbE, PsbF, PsbH, PsbI, PsbJ, PsbK, PsbL, PsbM, PsbT, PsbX, PsbY, PsbZ, Psb30/Ycf12, at least 3 peripheral proteins of the oxygen-evolving complex and a large number of cofactors. It forms dimeric complexes. Binds multiple chlorophylls and provides some of the ligands for the Ca-4Mn-5O cluster of the oxygen-evolving complex. It may also provide a ligand for a Cl- that is required for oxygen evolution. PSII binds additional chlorophylls, carotenoids and specific lipids. is required as a cofactor.

It localises to the plastid. The protein localises to the chloroplast thylakoid membrane. Functionally, one of the components of the core complex of photosystem II (PSII). It binds chlorophyll and helps catalyze the primary light-induced photochemical processes of PSII. PSII is a light-driven water:plastoquinone oxidoreductase, using light energy to abstract electrons from H(2)O, generating O(2) and a proton gradient subsequently used for ATP formation. The chain is Photosystem II CP43 reaction center protein from Abies alba (Edeltanne).